The primary structure comprises 157 residues: 2-C-methyl-D-erythritol 2,4-cyclodiphosphate synthase (157 aa).

2 residues coordinate a divalent metal cation: Asp8 and His10. 4-CDP-2-C-methyl-D-erythritol 2-phosphate is bound by residues 8–10 (DVH) and 34–35 (HS). An a divalent metal cation-binding site is contributed by His42. 4-CDP-2-C-methyl-D-erythritol 2-phosphate is bound by residues 56–58 (DIG), 132–135 (TTNE), and Arg142.

The protein belongs to the IspF family. In terms of assembly, homotrimer. The cofactor is a divalent metal cation.

The catalysed reaction is 4-CDP-2-C-methyl-D-erythritol 2-phosphate = 2-C-methyl-D-erythritol 2,4-cyclic diphosphate + CMP. It participates in isoprenoid biosynthesis; isopentenyl diphosphate biosynthesis via DXP pathway; isopentenyl diphosphate from 1-deoxy-D-xylulose 5-phosphate: step 4/6. Its function is as follows. Involved in the biosynthesis of isopentenyl diphosphate (IPP) and dimethylallyl diphosphate (DMAPP), two major building blocks of isoprenoid compounds. Catalyzes the conversion of 4-diphosphocytidyl-2-C-methyl-D-erythritol 2-phosphate (CDP-ME2P) to 2-C-methyl-D-erythritol 2,4-cyclodiphosphate (ME-CPP) with a corresponding release of cytidine 5-monophosphate (CMP). In Chlorobaculum parvum (strain DSM 263 / NCIMB 8327) (Chlorobium vibrioforme subsp. thiosulfatophilum), this protein is 2-C-methyl-D-erythritol 2,4-cyclodiphosphate synthase.